Reading from the N-terminus, the 397-residue chain is P2X purinoceptor 3 (397 aa).

The Cytoplasmic portion of the chain corresponds to 1–20 (MNCISDFFTYETTKSVVVKS). Residues 21–43 (WTIGIINRAVQLLIISYFVGWVF) form a helical membrane-spanning segment. Residues 44–322 (LHEKAYQVRD…AGKFNIIPTI (279 aa)) are Extracellular-facing. ATP-binding residues include lysine 63 and lysine 65. Disulfide bonds link cysteine 107-cysteine 153, cysteine 116-cysteine 137, and cysteine 122-cysteine 147. Glutamate 111 is a binding site for Mg(2+). Residue asparagine 139 is glycosylated (N-linked (GlcNAc...) asparagine). Residue aspartate 158 participates in Mg(2+) binding. Aspartate 158 contributes to the Ca(2+) binding site. Asparagine 170 is a glycosylation site (N-linked (GlcNAc...) asparagine). Threonine 172 is an ATP binding site. Residue asparagine 194 is glycosylated (N-linked (GlcNAc...) asparagine). 2 cysteine pairs are disulfide-bonded: cysteine 203-cysteine 213 and cysteine 247-cysteine 256. Positions 275, 279, and 281 each coordinate ATP. Asparagine 290 carries an N-linked (GlcNAc...) asparagine glycan. Position 299 (lysine 299) interacts with ATP. A helical membrane pass occupies residues 323 to 341 (ISSVAAFTSVGVGTVLCDI). Topologically, residues 342–397 (ILLNFLKGADHYKARKFEEVTETTLKGTASTNPVFTSDQATVEKQSTDSGAYSIGH) are cytoplasmic.

This sequence belongs to the P2X receptor family. As to quaternary structure, homotrimer. Forms heterotrimer with P2RX2. Heterotrimeric P2RX2/3 has a ligand dose-response profile that is distinct from either homotrimeric P2RX2 or P2RX3.

Its subcellular location is the cell membrane. The enzyme catalyses Ca(2+)(in) = Ca(2+)(out). It catalyses the reaction Na(+)(in) = Na(+)(out). Its activity is regulated as follows. Has high sensitivity to ATP. Fast activation by external ATP. Exhibits rapid desensitization. Sensitives to the ATP agonist:alpha/beta-methylene-ATP. Subject to allosteric inhibition by AF-219. Mg(2+) and Ca(2+) slow deactivation of P2RX3. Extracellular ATP-activated non-selective cation channel. Plays particularly important role in sensory neurons where its activation is critical for gustatory, nociceptive responses, visceral reflexes and sensory hypersensitization. The protein is P2X purinoceptor 3 (P2rx3) of Mus musculus (Mouse).